Here is a 354-residue protein sequence, read N- to C-terminus: Rhodopsin (354 aa).

The Extracellular portion of the chain corresponds to 1 to 36; it reads MNGTEGENFYVPMSNKTGVVRNPFEYPQYYLADHWM. Residues asparagine 2 and asparagine 15 are each glycosylated (N-linked (GlcNAc...) asparagine). Residues 37-61 traverse the membrane as a helical segment; it reads FAVLAAYMFFLIITGFPVNFLTLFV. Over 62–73 the chain is Cytoplasmic; that stretch reads TIQNKKLRQPLN. A helical transmembrane segment spans residues 74–96; that stretch reads YILLNLAVANLFMVFGGFTTTLI. Residues 97-110 lie on the Extracellular side of the membrane; the sequence is TSMNGYFVFGSTGC. The cysteines at positions 110 and 187 are disulfide-linked. A helical membrane pass occupies residues 111–133; it reads NLEGFFATLGGEISLWSLVVLAI. Residues 134–136 carry the 'Ionic lock' involved in activated form stabilization motif; it reads ERY. The Cytoplasmic portion of the chain corresponds to 134–152; the sequence is ERYVVVCKPMSNFRFGSQH. The helical transmembrane segment at 153–173 threads the bilayer; that stretch reads AIAGVSLTWVMAMACAAPPLV. The Extracellular portion of the chain corresponds to 174–202; it reads GWSRYIPEGLQCSCGIDYYTPKPEINNVS. N-linked (GlcNAc...) asparagine glycosylation is present at asparagine 200. Residues 203-224 form a helical membrane-spanning segment; the sequence is FVIYMFVVHFSIPLTIIFFCYG. Residues 225–252 are Cytoplasmic-facing; that stretch reads RLVCTVKAAAAQQQESETTQRAEREVTR. The helical transmembrane segment at 253 to 274 threads the bilayer; sequence MVVIMVIGFLICWLPYASVALY. At 275–286 the chain is on the extracellular side; the sequence is IFNNQGSEFGPV. The helical transmembrane segment at 287–308 threads the bilayer; that stretch reads FMTIPSFFAKSSALYNPLIYIL. Lysine 296 carries the post-translational modification N6-(retinylidene)lysine. At 309–354 the chain is on the cytoplasmic side; the sequence is MNKQFRNCMITTLCCGKNPFEEEESTSASASKTEASSVSSSQVSPA. S-palmitoyl cysteine attachment occurs at residues cysteine 322 and cysteine 323. The interval 333–354 is disordered; it reads STSASASKTEASSVSSSQVSPA. The segment covering 334–354 has biased composition (low complexity); the sequence is TSASASKTEASSVSSSQVSPA.

This sequence belongs to the G-protein coupled receptor 1 family. Opsin subfamily. In terms of processing, phosphorylated on some or all of the serine and threonine residues present in the C-terminal region. Post-translationally, contains one covalently linked retinal chromophore.

It is found in the membrane. It localises to the cell projection. The protein localises to the cilium. The protein resides in the photoreceptor outer segment. Its function is as follows. Photoreceptor required for image-forming vision at low light intensity. While most salt water fish species use retinal as chromophore, most freshwater fish use 3-dehydroretinal, or a mixture of retinal and 3-dehydroretinal. Light-induced isomerization of 11-cis to all-trans retinal triggers a conformational change that activates signaling via G-proteins. Subsequent receptor phosphorylation mediates displacement of the bound G-protein alpha subunit by arrestin and terminates signaling. This Galeus melastomus (Blackmouth catshark) protein is Rhodopsin (rho).